A 397-amino-acid chain; its full sequence is Succinyl-diaminopimelate desuccinylase (397 aa).

A Zn(2+)-binding site is contributed by His-73. Asp-75 is a catalytic residue. Asp-106 provides a ligand contact to Zn(2+). The active-site Proton acceptor is Glu-140. Residues Glu-141, Glu-169, and His-366 each contribute to the Zn(2+) site.

This sequence belongs to the peptidase M20A family. DapE subfamily. In terms of assembly, homodimer. Requires Zn(2+) as cofactor. Co(2+) serves as cofactor.

The catalysed reaction is N-succinyl-(2S,6S)-2,6-diaminopimelate + H2O = (2S,6S)-2,6-diaminopimelate + succinate. The protein operates within amino-acid biosynthesis; L-lysine biosynthesis via DAP pathway; LL-2,6-diaminopimelate from (S)-tetrahydrodipicolinate (succinylase route): step 3/3. Its function is as follows. Catalyzes the hydrolysis of N-succinyl-L,L-diaminopimelic acid (SDAP), forming succinate and LL-2,6-diaminopimelate (DAP), an intermediate involved in the bacterial biosynthesis of lysine and meso-diaminopimelic acid, an essential component of bacterial cell walls. This Rhizobium meliloti (strain 1021) (Ensifer meliloti) protein is Succinyl-diaminopimelate desuccinylase.